The primary structure comprises 286 residues: 4-hydroxybenzoate octaprenyltransferase (286 aa).

The next 8 membrane-spanning stretches (helical) occupy residues 20–40 (IGTLLLLWPCLMALVLAAQGL), 43–63 (IKVLLIFIVGVVIMRANGCII), 96–116 (LFTLLGLAAFCLVLWLNPLVV), 142–162 (FLGIVWSWSIPMAYAAQLGEV), 167–187 (WWLFMANWCWTVAYDTMYAIV), 210–230 (QIIGVFQLAALGCFVMAGLVA), 235–255 (IYGLGIISFIGFAVYQQRLIF), and 266–286 (FLNNNWAGMVLFIALALDYMI).

This sequence belongs to the UbiA prenyltransferase family. Requires Mg(2+) as cofactor.

It localises to the cell inner membrane. It catalyses the reaction all-trans-octaprenyl diphosphate + 4-hydroxybenzoate = 4-hydroxy-3-(all-trans-octaprenyl)benzoate + diphosphate. It participates in cofactor biosynthesis; ubiquinone biosynthesis. Its function is as follows. Catalyzes the prenylation of para-hydroxybenzoate (PHB) with an all-trans polyprenyl group. Mediates the second step in the final reaction sequence of ubiquinone-8 (UQ-8) biosynthesis, which is the condensation of the polyisoprenoid side chain with PHB, generating the first membrane-bound Q intermediate 3-octaprenyl-4-hydroxybenzoate. This chain is 4-hydroxybenzoate octaprenyltransferase, found in Shewanella frigidimarina (strain NCIMB 400).